A 244-amino-acid chain; its full sequence is NAD(P)H-quinone oxidoreductase subunit K (244 aa).

Positions 60, 61, 125, and 156 each coordinate [4Fe-4S] cluster.

Belongs to the complex I 20 kDa subunit family. NDH-1 can be composed of about 15 different subunits; different subcomplexes with different compositions have been identified which probably have different functions. It depends on [4Fe-4S] cluster as a cofactor.

Its subcellular location is the cellular thylakoid membrane. It catalyses the reaction a plastoquinone + NADH + (n+1) H(+)(in) = a plastoquinol + NAD(+) + n H(+)(out). The catalysed reaction is a plastoquinone + NADPH + (n+1) H(+)(in) = a plastoquinol + NADP(+) + n H(+)(out). NDH-1 shuttles electrons from an unknown electron donor, via FMN and iron-sulfur (Fe-S) centers, to quinones in the respiratory and/or the photosynthetic chain. The immediate electron acceptor for the enzyme in this species is believed to be plastoquinone. Couples the redox reaction to proton translocation, and thus conserves the redox energy in a proton gradient. Cyanobacterial NDH-1 also plays a role in inorganic carbon-concentration. In Synechococcus sp. (strain CC9902), this protein is NAD(P)H-quinone oxidoreductase subunit K.